We begin with the raw amino-acid sequence, 301 residues long: Sulfate adenylyltransferase subunit 2 (301 aa).

Residues 279-301 (RQGRLIDHDQDGSMEKKKQEGYF) are disordered.

Belongs to the PAPS reductase family. CysD subfamily. As to quaternary structure, heterodimer composed of CysD, the smaller subunit, and CysN.

It carries out the reaction sulfate + ATP + H(+) = adenosine 5'-phosphosulfate + diphosphate. It functions in the pathway sulfur metabolism; hydrogen sulfide biosynthesis; sulfite from sulfate: step 1/3. In terms of biological role, with CysN forms the ATP sulfurylase (ATPS) that catalyzes the adenylation of sulfate producing adenosine 5'-phosphosulfate (APS) and diphosphate, the first enzymatic step in sulfur assimilation pathway. APS synthesis involves the formation of a high-energy phosphoric-sulfuric acid anhydride bond driven by GTP hydrolysis by CysN coupled to ATP hydrolysis by CysD. The chain is Sulfate adenylyltransferase subunit 2 from Geotalea uraniireducens (strain Rf4) (Geobacter uraniireducens).